The sequence spans 270 residues: MSTPFYVSPQQAMADRAEYARKGIARGRSLVVLQYADGIVFVGENPSRALHKFSEIYDRIGFAAAGKYNEYENLRIGGVRYADLRGYTYDRDDVTARGLANVYAQTLGTIFSSAAEKPYEVELVVAEVGSEPEGDQIYRLPHDGSIVDEHGSVAVGGNSEQISTFLDQRHRDGMTLAEALKLAVQALSREPGGGEREIPAERLEVAVLDRTRPQQRKFKRIVGRQLARLLDTEAAGSTPTDAPSDTEDGDSTDGTDRADGTTDSTEETEK.

Positions 229–270 (LLDTEAAGSTPTDAPSDTEDGDSTDGTDRADGTTDSTEETEK) are disordered. Positions 244–253 (SDTEDGDSTD) are enriched in acidic residues.

The protein belongs to the peptidase T1A family. As to quaternary structure, the 20S proteasome core is composed of 14 alpha and 14 beta subunits that assemble into four stacked heptameric rings, resulting in a barrel-shaped structure. The two inner rings, each composed of seven catalytic beta subunits, are sandwiched by two outer rings, each composed of seven alpha subunits. The catalytic chamber with the active sites is on the inside of the barrel. Has a gated structure, the ends of the cylinder being occluded by the N-termini of the alpha-subunits. Is capped by the proteasome-associated ATPase, ARC.

It localises to the cytoplasm. It functions in the pathway protein degradation; proteasomal Pup-dependent pathway. With respect to regulation, the formation of the proteasomal ATPase ARC-20S proteasome complex, likely via the docking of the C-termini of ARC into the intersubunit pockets in the alpha-rings, may trigger opening of the gate for substrate entry. Interconversion between the open-gate and close-gate conformations leads to a dynamic regulation of the 20S proteasome proteolysis activity. Functionally, component of the proteasome core, a large protease complex with broad specificity involved in protein degradation. The sequence is that of Proteasome subunit alpha from Streptomyces griseus subsp. griseus (strain JCM 4626 / CBS 651.72 / NBRC 13350 / KCC S-0626 / ISP 5235).